A 375-amino-acid polypeptide reads, in one-letter code: MKVKVLSLLVPALLVAGAANAAEVYNKDGNKLDLYGKVDGLHYFSDDKSVDGDQTYMRLGFKGETQVTDQLTGYGQWEYQIQGNAPESENNSWTRVAFAGLKFQDIGSFDYGRNYGVVYDVTSWTDVLPEFGGDTYGSDNFMQQRGNGFATYRNTDFFGLVDGLNFAVQYQGQNGSVSGENDPDFTGHGITNNGRKALRQNGDGVGGSITYDYEGFGVGAAVSSSKRTDAQNTAAYIGNGDRAETYTGGLKYDANNIYLAAQYTQTYNATRVGSLGWANKAQNFEAVAQYQFDFGLRPSVAYLQSKGKNLGTIGTRNYDDEDILKYVDVGATYYFNKNMSTYVDYKINLLDDNQFTRDAGINTDNIVALGLVYQF.

The N-terminal stretch at 1–21 is a signal peptide; that stretch reads MKVKVLSLLVPALLVAGAANA. The Periplasmic segment spans residues 22 to 33; that stretch reads AEVYNKDGNKLD. A beta stranded membrane pass occupies residues 34 to 42; the sequence is LYGKVDGLH. Residues 43–53 are Extracellular-facing; the sequence is YFSDDKSVDGD. Residues 54–63 form a beta stranded membrane-spanning segment; the sequence is QTYMRLGFKG. Over 64–73 the chain is Periplasmic; it reads ETQVTDQLTG. Residues 74–84 traverse the membrane as a beta stranded segment; sequence YGQWEYQIQGN. The Extracellular segment spans residues 85–91; sequence APESENN. Residues 92 to 101 traverse the membrane as a beta stranded segment; sequence SWTRVAFAGL. Topologically, residues 102–106 are periplasmic; it reads KFQDI. Residues 107–115 traverse the membrane as a beta stranded segment; it reads GSFDYGRNY. Over 116 to 141 the chain is Extracellular; sequence GVVYDVTSWTDVLPEFGGDTYGSDNF. The beta stranded transmembrane segment at 142–154 threads the bilayer; that stretch reads MQQRGNGFATYRN. Over 155–163 the chain is Periplasmic; sequence TDFFGLVDG. Residues 164-171 traverse the membrane as a beta stranded segment; sequence LNFAVQYQ. Residues 172–204 are Extracellular-facing; the sequence is GQNGSVSGENDPDFTGHGITNNGRKALRQNGDG. The beta stranded transmembrane segment at 205–211 threads the bilayer; it reads VGGSITY. Residues 212 to 215 are Periplasmic-facing; that stretch reads DYEG. The chain crosses the membrane as a beta stranded span at residues 216–223; that stretch reads FGVGAAVS. The Extracellular portion of the chain corresponds to 224-245; that stretch reads SSKRTDAQNTAAYIGNGDRAET. Residues 246–252 traverse the membrane as a beta stranded segment; it reads YTGGLKY. Residues 253–256 are Periplasmic-facing; it reads DANN. Residues 257–264 traverse the membrane as a beta stranded segment; sequence IYLAAQYT. At 265–273 the chain is on the extracellular side; the sequence is QTYNATRVG. Residues 274–290 form a beta stranded membrane-spanning segment; the sequence is SLGWANKAQNFEAVAQY. Residues 291–295 lie on the Periplasmic side of the membrane; it reads QFDFG. The chain crosses the membrane as a beta stranded span at residues 296–303; the sequence is LRPSVAYL. The Extracellular portion of the chain corresponds to 304–326; sequence QSKGKNLGTIGTRNYDDEDILKY. A beta stranded transmembrane segment spans residues 327 to 334; sequence VDVGATYY. Topologically, residues 335–338 are periplasmic; the sequence is FNKN. A beta stranded transmembrane segment spans residues 339–346; the sequence is MSTYVDYK. At 347–366 the chain is on the extracellular side; that stretch reads INLLDDNQFTRDAGINTDNI. A beta stranded transmembrane segment spans residues 367 to 374; that stretch reads VALGLVYQ. Residue Phe-375 is a topological domain, periplasmic.

The protein belongs to the Gram-negative porin family. As to quaternary structure, homotrimer. Forms mixed heterotrimers with OmpF; other mixed heterotrimers are also probable.

It localises to the cell outer membrane. Forms pores that allow passive diffusion of small molecules across the outer membrane. In terms of biological role, (Microbial infection) Supports colicin E5 entry in the absence of its major receptor OmpF. Its function is as follows. (Microbial infection) A mixed OmpC-OmpF heterotrimer is the outer membrane receptor for toxin CdiA-EC536. This Escherichia coli O6:K15:H31 (strain 536 / UPEC) protein is Outer membrane porin C (ompC).